The sequence spans 302 residues: Beta-casein (302 aa).

The N-terminal stretch at 1–15 (MKLLILTCLVALGFA) is a signal peptide. 2 positions are modified to phosphoserine: serine 23 and serine 25. A run of 16 repeats spans residues 144-151 (KREMLPIY), 152-159 (ERERLPAH), 160-167 (KRESLLAH), 168-175 (ERESLLAH), 176-182 (ERDILVP), 183-190 (QREMSFVP), 191-198 (EREFLFAS), 199-204 (ERVVLP), 205-214 (EQEKEILHND), 215-222 (EREVLAVH), 223-230 (KKEILPPF), 231-238 (EKEKVLPL), 241-247 (HRVVPLP), 248-255 (QREIVPPF), 256-262 (QRETLLP), and 263-269 (EEILPVN). The 16 X approximate tandem repeats stretch occupies residues 144 to 269 (KREMLPIYER…LLPEEILPVN (126 aa)).

It belongs to the beta-casein family. As to expression, mammary gland specific. Secreted in milk.

The protein resides in the secreted. In terms of biological role, important role in determination of the surface properties of the casein micelles. This is Beta-casein (CSN2) from Notamacropus eugenii (Tammar wallaby).